The sequence spans 349 residues: MVRPKQSIQSHRKDEHVFLAEKFHQDDRQNDFDGLRFIHQSLPELAIADVDISTQFAGTTWQSPFYINGMTGGSQQTKKLNAQLAQVAQIAGLPMATGSQSVAIKDPTLVDTFSVIREFNPAGFILANIGAGNDLSVAQKAVAMTQANALEIHVNTAQEVVMPEGDREFYWLDQIGEIVANLDVPVIVKEVGFGMSAETIAKLQSVGVTNIDVSGKGGTNFVTIENERRRDKAYDYLSDWGQSTVESLFESQAFQTELTILASGGIRNPLDIVKALRLGASAVGISGQILHMLIKTGPTETAEQLLAWQAQIQSIMAILGARNLTALQSAPMILSPNLRHYLNERHLSL.

12–13 (RK) lines the substrate pocket. FMN-binding positions include 69–71 (GMT), Ser-99, and Asn-128. Residue Gln-158 participates in substrate binding. Glu-159 contacts Mg(2+). Residues Lys-189, Ser-214, Thr-219, 265–267 (GIR), and 286–287 (SG) each bind FMN.

The protein belongs to the IPP isomerase type 2 family. As to quaternary structure, homooctamer. Dimer of tetramers. Requires FMN as cofactor. NADPH serves as cofactor. Mg(2+) is required as a cofactor.

It is found in the cytoplasm. The catalysed reaction is isopentenyl diphosphate = dimethylallyl diphosphate. Functionally, involved in the biosynthesis of isoprenoids. Catalyzes the 1,3-allylic rearrangement of the homoallylic substrate isopentenyl (IPP) to its allylic isomer, dimethylallyl diphosphate (DMAPP). This is Isopentenyl-diphosphate delta-isomerase from Latilactobacillus sakei subsp. sakei (strain 23K) (Lactobacillus sakei subsp. sakei).